The following is a 197-amino-acid chain: Adenylate kinase 1 (197 aa).

Residue 19–24 participates in ATP binding; that stretch reads GSGKGT. Residues 39–68 are NMP; it reads SSGDLLRAEVQSGSPKGKELKAMMERGELV. Residues serine 40, arginine 45, 95-98, and glutamine 102 contribute to the AMP site; that span reads GYPR. Residues 132–142 form an LID region; that stretch reads KRAETSNRVDD. Arginine 133 contributes to the ATP binding site. Positions 139 and 150 each coordinate AMP. Glycine 178 contributes to the ATP binding site.

The protein belongs to the adenylate kinase family. AK1 subfamily. As to quaternary structure, monomer. Mg(2+) is required as a cofactor.

The protein localises to the cytoplasm. The enzyme catalyses AMP + ATP = 2 ADP. Its pathway is purine metabolism; purine nucleotide biosynthesis. In terms of biological role, catalyzes the reversible transfer of the terminal phosphate group between ATP and AMP. Plays an important role in cellular energy homeostasis and in adenine nucleotide metabolism. This is Adenylate kinase 1 from Schistosoma mansoni (Blood fluke).